The primary structure comprises 277 residues: S-formylglutathione hydrolase FrmB (277 aa).

Catalysis depends on charge relay system residues Ser145, Asp221, and His254.

Belongs to the esterase D family.

The catalysed reaction is S-formylglutathione + H2O = formate + glutathione + H(+). Functionally, serine hydrolase involved in the detoxification of formaldehyde. Hydrolyzes S-formylglutathione to glutathione and formate. This chain is S-formylglutathione hydrolase FrmB (frmB), found in Escherichia coli O6:H1 (strain CFT073 / ATCC 700928 / UPEC).